Here is a 308-residue protein sequence, read N- to C-terminus: N-acetyl-gamma-glutamyl-phosphate reductase (308 aa).

Cysteine 117 is an active-site residue.

It belongs to the NAGSA dehydrogenase family. Type 2 subfamily.

It localises to the cytoplasm. The catalysed reaction is N-acetyl-L-glutamate 5-semialdehyde + phosphate + NADP(+) = N-acetyl-L-glutamyl 5-phosphate + NADPH + H(+). It functions in the pathway amino-acid biosynthesis; L-arginine biosynthesis; N(2)-acetyl-L-ornithine from L-glutamate: step 3/4. In terms of biological role, catalyzes the NADPH-dependent reduction of N-acetyl-5-glutamyl phosphate to yield N-acetyl-L-glutamate 5-semialdehyde. The polypeptide is N-acetyl-gamma-glutamyl-phosphate reductase (Sinorhizobium fredii (strain NBRC 101917 / NGR234)).